Reading from the N-terminus, the 143-residue chain is Sorting nexin-3 (143 aa).

Residues 23 to 140 (NILEIDVINP…SSFLQSPEFK (118 aa)) form the PX domain. A 1,2-diacyl-sn-glycero-3-phospho-(1D-myo-inositol-3-phosphate) contacts are provided by arginine 66, serine 68, lysine 92, arginine 97, and arginine 106.

The protein belongs to the sorting nexin family.

The protein resides in the cytoplasm. Its subcellular location is the golgi apparatus membrane. It is found in the prevacuolar compartment membrane. Functionally, required for retention of late Golgi membrane proteins. Component of the retrieval machinery that functions by direct interaction with the cytosolic tails of certain TGN membrane proteins during the sorting/budding process at the prevacuolar compartment. Binds phosphatidylinositol 3-phosphate (PtdIns(P3)). The sequence is that of Sorting nexin-3 (snx3) from Schizosaccharomyces pombe (strain 972 / ATCC 24843) (Fission yeast).